A 198-amino-acid polypeptide reads, in one-letter code: Dephospho-CoA kinase (198 aa).

Residues 3–198 form the DPCK domain; it reads IVGITGGIGS…LLAKERLELA (196 aa). 11-16 contacts ATP; sequence GSGKTT.

This sequence belongs to the CoaE family.

The protein resides in the cytoplasm. It carries out the reaction 3'-dephospho-CoA + ATP = ADP + CoA + H(+). The protein operates within cofactor biosynthesis; coenzyme A biosynthesis; CoA from (R)-pantothenate: step 5/5. Its function is as follows. Catalyzes the phosphorylation of the 3'-hydroxyl group of dephosphocoenzyme A to form coenzyme A. This Dehalococcoides mccartyi (strain ATCC BAA-2266 / KCTC 15142 / 195) (Dehalococcoides ethenogenes (strain 195)) protein is Dephospho-CoA kinase.